Reading from the N-terminus, the 364-residue chain is Methylthioribose-1-phosphate isomerase (364 aa).

Substrate-binding positions include 53-55 (RGA), Arg90, and Gln200. Residue Asp241 is the Proton donor of the active site. A substrate-binding site is contributed by 251–252 (NK).

It belongs to the eIF-2B alpha/beta/delta subunits family. MtnA subfamily.

It carries out the reaction 5-(methylsulfanyl)-alpha-D-ribose 1-phosphate = 5-(methylsulfanyl)-D-ribulose 1-phosphate. It participates in amino-acid biosynthesis; L-methionine biosynthesis via salvage pathway; L-methionine from S-methyl-5-thio-alpha-D-ribose 1-phosphate: step 1/6. Functionally, catalyzes the interconversion of methylthioribose-1-phosphate (MTR-1-P) into methylthioribulose-1-phosphate (MTRu-1-P). The protein is Methylthioribose-1-phosphate isomerase of Methylobacterium nodulans (strain LMG 21967 / CNCM I-2342 / ORS 2060).